The primary structure comprises 791 residues: Interleukin-17 receptor C (791 aa).

A signal peptide spans 1-20 (MPVPWFLLSLALGRSPVVLS). Over 21 to 538 (LERLVGPQDA…CPMDKYIHKR (518 aa)) the chain is Extracellular. 2 N-linked (GlcNAc...) asparagine glycosylation sites follow: N189 and N257. A disulfide bridge links C265 with C277. N284, N297, N324, and N334 each carry an N-linked (GlcNAc...) asparagine glycan. Disulfide bonds link C341–C391, C343–C359, and C400–C409. N-linked (GlcNAc...) asparagine glycans are attached at residues N420, N443, and N477. An intrachain disulfide couples C439 to C453. Intrachain disulfides connect C481-C488 and C515-C529. The chain crosses the membrane as a helical span at residues 539–559 (WALVWLACLLFAAALSLILLL). Residues 560-791 (KKDHAKGWLR…GAGPGAGDGT (232 aa)) lie on the Cytoplasmic side of the membrane. The SEFIR domain occupies 583-735 (GRAALLLYSA…LPSQLPDFLG (153 aa)). Residues 762–791 (ALDSYFHPPGTPAPGRGVGPGAGPGAGDGT) form a disordered region. Positions 777 to 791 (RGVGPGAGPGAGDGT) are enriched in gly residues.

In terms of assembly, homodimer; disulfide-linked. Heterodimer with IL17RA. Heterodimerization with IL17RA is independent of the cytoplasmic tail. Associates with non-glycosylated IL17RA constitutively. Binding of IL17A and IL17F induces association with glycosylated IL17RA. Forms complexes with 2:1 binding stoichiometry: two receptor chains for one interleukin molecule. IL17A homodimer preferentially drives the formation of IL17RA-IL17RC heterodimeric receptor complex, whereas IL17F homodimer forms predominantly complexes with IL17RC homodimer. IL17A-IL17F forms complexes with IL17RA-IL17RC, but with lower affinity when compared to IL17A homodimer. IL17RC chain cannot distinguish between IL17A and IL17F molecules, potentially enabling the formation of topologically distinct complexes. Interacts (through SEFIR domain and extended downstream region) with TRAF3IP2/ACT1 (phosphorylated). In terms of tissue distribution, expressed in prostate, skeletal muscle, kidney and placenta (at protein level). Expressed in brain, cartilage, colon, heart, intestine, kidney, liver, lung, muscle, placenta, and prostate. Also detected in thyroid, trachea and adrenal gland. Low expression in thymus and leukocytes.

The protein localises to the cell membrane. Its function is as follows. Receptor for IL17A and IL17F, major effector cytokines of innate and adaptive immune system involved in antimicrobial host defense and maintenance of tissue integrity. Receptor for IL17A and IL17F, major effector cytokines of innate and adaptive immune system involved in antimicrobial host defense and maintenance of tissue integrity. Receptor for IL17A and IL17F homodimers as part of a heterodimeric complex with IL17RA. Receptor for the heterodimer formed by IL17A and IL17B as part of a heterodimeric complex with IL17RA. Has also been shown to be the cognate receptor for IL17F and to bind IL17A with high affinity without the need for IL17RA. Upon binding of IL17F homodimer triggers downstream activation of TRAF6 and NF-kappa-B signaling pathway. Induces transcriptional activation of IL33, a potent cytokine that stimulates group 2 innate lymphoid cells and adaptive T-helper 2 cells involved in pulmonary allergic response to fungi. Promotes sympathetic innervation of peripheral organs by coordinating the communication between gamma-delta T cells and parenchymal cells. Stimulates sympathetic innervation of thermogenic adipose tissue by driving TGFB1 expression. Binding of IL17A-IL17F to IL17RA-IL17RC heterodimeric receptor complex triggers homotypic interaction of IL17RA and IL17RC chains with TRAF3IP2 adapter through SEFIR domains. This leads to downstream TRAF6-mediated activation of NF-kappa-B and MAPkinase pathways ultimately resulting in transcriptional activation of cytokines, chemokines, antimicrobial peptides and matrix metalloproteinases, with potential strong immune inflammation. Primarily induces neutrophil activation and recruitment at infection and inflammatory sites. Stimulates the production of antimicrobial beta-defensins DEFB1, DEFB103A, and DEFB104A by mucosal epithelial cells, limiting the entry of microbes through the epithelial barriers. Receptor for both IL17A and IL17F. In terms of biological role, does not bind IL17A or IL17F. This is Interleukin-17 receptor C (IL17RC) from Homo sapiens (Human).